The primary structure comprises 206 residues: dITP/XTP pyrophosphatase (206 aa).

A substrate-binding site is contributed by 7 to 12 (SRNPKK). The active-site Proton acceptor is the D72. D72 is a Mg(2+) binding site. Residues S73, 155–158 (FGYD), K178, and 183–184 (HR) each bind substrate.

Belongs to the HAM1 NTPase family. As to quaternary structure, homodimer. It depends on Mg(2+) as a cofactor.

The catalysed reaction is XTP + H2O = XMP + diphosphate + H(+). It catalyses the reaction dITP + H2O = dIMP + diphosphate + H(+). The enzyme catalyses ITP + H2O = IMP + diphosphate + H(+). In terms of biological role, pyrophosphatase that catalyzes the hydrolysis of nucleoside triphosphates to their monophosphate derivatives, with a high preference for the non-canonical purine nucleotides XTP (xanthosine triphosphate), dITP (deoxyinosine triphosphate) and ITP. Seems to function as a house-cleaning enzyme that removes non-canonical purine nucleotides from the nucleotide pool, thus preventing their incorporation into DNA/RNA and avoiding chromosomal lesions. The chain is dITP/XTP pyrophosphatase from Mycobacteroides abscessus (strain ATCC 19977 / DSM 44196 / CCUG 20993 / CIP 104536 / JCM 13569 / NCTC 13031 / TMC 1543 / L948) (Mycobacterium abscessus).